A 349-amino-acid chain; its full sequence is tRNA N6-adenosine threonylcarbamoyltransferase (349 aa).

The Fe cation site is built by His116 and His120. Substrate-binding positions include 139–143, Asp172, Gly185, and Asn283; that span reads LVSGG. Residue Asp311 coordinates Fe cation.

The protein belongs to the KAE1 / TsaD family. Fe(2+) serves as cofactor.

It localises to the cytoplasm. It catalyses the reaction L-threonylcarbamoyladenylate + adenosine(37) in tRNA = N(6)-L-threonylcarbamoyladenosine(37) in tRNA + AMP + H(+). Its function is as follows. Required for the formation of a threonylcarbamoyl group on adenosine at position 37 (t(6)A37) in tRNAs that read codons beginning with adenine. Is involved in the transfer of the threonylcarbamoyl moiety of threonylcarbamoyl-AMP (TC-AMP) to the N6 group of A37, together with TsaE and TsaB. TsaD likely plays a direct catalytic role in this reaction. The chain is tRNA N6-adenosine threonylcarbamoyltransferase from Colwellia psychrerythraea (strain 34H / ATCC BAA-681) (Vibrio psychroerythus).